A 322-amino-acid polypeptide reads, in one-letter code: Endochitinase CH25 (322 aa).

The first 20 residues, 1–20 (MKSCLLLFLIFSFLLSFSLA), serve as a signal peptide directing secretion. A Chitin-binding type-1 domain is found at 21-62 (EQCGRQAGGALCPNGLCCSEFGWCGDTEAYCKQPGCQSQCGG). Cystine bridges form between Cys-23–Cys-38, Cys-32–Cys-44, Cys-37–Cys-51, Cys-56–Cys-60, Cys-92–Cys-154, Cys-166–Cys-174, and Cys-273–Cys-305. Residue Glu-136 is the Proton donor of the active site.

Belongs to the glycosyl hydrolase 19 family. Chitinase class I subfamily. In terms of tissue distribution, high expression in roots, moderate in floral tissues and low in stems and leaves.

The catalysed reaction is Random endo-hydrolysis of N-acetyl-beta-D-glucosaminide (1-&gt;4)-beta-linkages in chitin and chitodextrins.. This Brassica napus (Rape) protein is Endochitinase CH25.